Here is a 561-residue protein sequence, read N- to C-terminus: Arginine--tRNA ligase (561 aa).

Residues 119-129 (PNIAKPMSMGH) carry the 'HIGH' region motif.

The protein belongs to the class-I aminoacyl-tRNA synthetase family. In terms of assembly, monomer.

The protein localises to the cytoplasm. The catalysed reaction is tRNA(Arg) + L-arginine + ATP = L-arginyl-tRNA(Arg) + AMP + diphosphate. The chain is Arginine--tRNA ligase from Lactobacillus acidophilus (strain ATCC 700396 / NCK56 / N2 / NCFM).